Consider the following 226-residue polypeptide: MSSGAGSDATGAGGVHAAGSGDRAVAAAVERAKATAARNIPAFDDLPVPADTANLREGADLNNALLALLPLVGVWRGEGEGRGPDGDYRFGQQIVVSHDGGDYLNWESRSWRLTATGDYQEPGLREAGFWRFVADPYDPSESQAIELLLAHSAGYVELFYGRPRTQSSWELVTDALARSRSGVLVGGAKRLYGIVEGGDLAYVEERVDADGGLVPHLSARLSRFVG.

The GXWXGXG motif lies at 73–79 (GVWRGEG). Lys-189 and His-216 together coordinate heme b.

The protein belongs to the nitrobindin family. As to quaternary structure, homodimer. The cofactor is heme b.

It carries out the reaction peroxynitrite = nitrate. It functions in the pathway nitrogen metabolism. Its function is as follows. Heme-binding protein able to scavenge peroxynitrite and to protect free L-tyrosine against peroxynitrite-mediated nitration, by acting as a peroxynitrite isomerase that converts peroxynitrite to nitrate. Therefore, this protein likely plays a role in peroxynitrite sensing and in the detoxification of reactive nitrogen and oxygen species (RNS and ROS, respectively). Is able to bind nitric oxide (NO) in vitro, but may act as a sensor of peroxynitrite levels in vivo. This chain is Peroxynitrite isomerase 2, found in Mycobacterium bovis (strain ATCC BAA-935 / AF2122/97).